Here is a 511-residue protein sequence, read N- to C-terminus: V-type proton ATPase subunit B, brain isoform (511 aa).

Arg-400 is an ATP binding site.

The protein belongs to the ATPase alpha/beta chains family. V-ATPase is a heteromultimeric enzyme made up of two complexes: the ATP-hydrolytic V1 complex and the proton translocation V0 complex. The V1 complex consists of three catalytic AB heterodimers that form a heterohexamer, three peripheral stalks each consisting of EG heterodimers, one central rotor including subunits D and F, and the regulatory subunits C and H. The proton translocation complex V0 consists of the proton transport subunit a, a ring of proteolipid subunits c9c'', rotary subunit d, subunits e and f, and the accessory subunits ATP6AP1/Ac45 and ATP6AP2/PRR.

It localises to the apical cell membrane. The protein resides in the melanosome. Its subcellular location is the cytoplasm. The protein localises to the cytoplasmic vesicle. It is found in the secretory vesicle. It localises to the synaptic vesicle membrane. The protein resides in the clathrin-coated vesicle membrane. Non-catalytic subunit of the V1 complex of vacuolar(H+)-ATPase (V-ATPase), a multisubunit enzyme composed of a peripheral complex (V1) that hydrolyzes ATP and a membrane integral complex (V0) that translocates protons. V-ATPase is responsible for acidifying and maintaining the pH of intracellular compartments and in some cell types, is targeted to the plasma membrane, where it is responsible for acidifying the extracellular environment. In renal intercalated cells, can partially compensate the lack of ATP6V1B1 and mediate secretion of protons (H+) into the urine under base-line conditions but not in conditions of acid load. This is V-type proton ATPase subunit B, brain isoform (ATP6V1B2) from Pongo abelii (Sumatran orangutan).